Reading from the N-terminus, the 78-residue chain is U-scoloptoxin(04)-Er1a (78 aa).

The N-terminal stretch at 1 to 24 is a signal peptide; it reads MTRHLIFAAVLLVCLFVCWNAIGA. Residues 25 to 28 constitute a propeptide that is removed on maturation; the sequence is QDAR.

It belongs to the scoloptoxin-04 family. Post-translationally, contains 2 disulfide bonds. As to expression, expressed by the venom gland.

It is found in the secreted. The polypeptide is U-scoloptoxin(04)-Er1a (Ethmostigmus rubripes (Giant centipede)).